A 175-amino-acid chain; its full sequence is Crossover junction endodeoxyribonuclease RuvC (175 aa).

Catalysis depends on residues aspartate 7, glutamate 68, and aspartate 141. Residues aspartate 7, glutamate 68, and aspartate 141 each contribute to the Mg(2+) site.

Belongs to the RuvC family. In terms of assembly, homodimer which binds Holliday junction (HJ) DNA. The HJ becomes 2-fold symmetrical on binding to RuvC with unstacked arms; it has a different conformation from HJ DNA in complex with RuvA. In the full resolvosome a probable DNA-RuvA(4)-RuvB(12)-RuvC(2) complex forms which resolves the HJ. It depends on Mg(2+) as a cofactor.

It is found in the cytoplasm. The enzyme catalyses Endonucleolytic cleavage at a junction such as a reciprocal single-stranded crossover between two homologous DNA duplexes (Holliday junction).. Functionally, the RuvA-RuvB-RuvC complex processes Holliday junction (HJ) DNA during genetic recombination and DNA repair. Endonuclease that resolves HJ intermediates. Cleaves cruciform DNA by making single-stranded nicks across the HJ at symmetrical positions within the homologous arms, yielding a 5'-phosphate and a 3'-hydroxyl group; requires a central core of homology in the junction. The consensus cleavage sequence is 5'-(A/T)TT(C/G)-3'. Cleavage occurs on the 3'-side of the TT dinucleotide at the point of strand exchange. HJ branch migration catalyzed by RuvA-RuvB allows RuvC to scan DNA until it finds its consensus sequence, where it cleaves and resolves the cruciform DNA. This chain is Crossover junction endodeoxyribonuclease RuvC, found in Salinispora arenicola (strain CNS-205).